We begin with the raw amino-acid sequence, 203 residues long: uncharacterized protein (203 aa).

Positions 117-138 (SSDPKLKQPSNCLNDQTNNDSA) are disordered. Polar residues predominate over residues 124-138 (QPSNCLNDQTNNDSA).

The protein localises to the cytoplasm. The protein resides in the nucleus. This is an uncharacterized protein from Schizosaccharomyces pombe (strain 972 / ATCC 24843) (Fission yeast).